The following is a 187-amino-acid chain: Ubiquinone biosynthesis protein COQ4 homolog, mitochondrial (187 aa).

Residues histidine 77, aspartate 78, histidine 81, and glutamate 93 each coordinate Zn(2+).

This sequence belongs to the COQ4 family. As to quaternary structure, component of a multi-subunit COQ enzyme complex. The cofactor is Zn(2+).

It localises to the mitochondrion inner membrane. The catalysed reaction is a 4-hydroxy-3-methoxy-5-(all-trans-polyprenyl)benzoate + H(+) = a 2-methoxy-6-(all-trans-polyprenyl)phenol + CO2. The protein operates within cofactor biosynthesis; ubiquinone biosynthesis. Its function is as follows. Lyase that catalyzes the C1-decarboxylation of 4-hydroxy-3-methoxy-5-(all-trans-polyprenyl)benzoic acid into 2-methoxy-6-(all-trans-polyprenyl)phenol during ubiquinone biosynthesis. In Leishmania major, this protein is Ubiquinone biosynthesis protein COQ4 homolog, mitochondrial.